We begin with the raw amino-acid sequence, 596 residues long: Pentatricopeptide repeat-containing protein At1g80270, mitochondrial (596 aa).

Residues 1–69 (MFALSKVLRR…RALSSSAGTK (69 aa)) constitute a mitochondrion transit peptide. Positions 62 to 119 (LSSSAGTKSDQEEDDLEDGFSELEGSKSGQGSTSSDEDEGKLSADEEEEEELDLIETD) are disordered. Composition is skewed to acidic residues over residues 72–82 (QEEDDLEDGFS) and 96–117 (SDEDEGKLSADEEEEEELDLIE). 9 PPR repeats span residues 228–262 (GEVLYRTLLANCVAAGNVKKSELVFNKMKDLGFPL), 263–296 (SGFTCDQMLLLHKRIDRKKIADVLLLMEKENIKP), 297–331 (SLLTYKILIDVKGATNDISGMEQILETMKDEGVEL), 332–366 (DFQTQALTARHYSGAGLKDKAEKVLKEMEGESLEA), 367–397 (NRRAFKDLLSIYASLGREDEVKRIWKICESK), 399–433 (YFEESLAAIQAFGKLNKVQEAEAIFEKIVKMDRRA), 434–468 (SSSTYSVLLRVYVDHKMLSKGKDLVKRMAESGCRI), 469–503 (EATTWDALIKLYVEAGEVEKADSLLDKASKQSHTK), and 505–539 (MMNSFMYIMDEYSKRGDVHNTEKIFLKMREAGYTS).

Belongs to the PPR family. P subfamily.

Its subcellular location is the mitochondrion. In Arabidopsis thaliana (Mouse-ear cress), this protein is Pentatricopeptide repeat-containing protein At1g80270, mitochondrial.